A 308-amino-acid chain; its full sequence is D-alanine--D-alanine ligase (308 aa).

Residues lysine 105 to aspartate 302 form the ATP-grasp domain. Residue aspartate 133–asparagine 188 coordinates ATP. Positions 256, 269, and 271 each coordinate Mg(2+).

Belongs to the D-alanine--D-alanine ligase family. The cofactor is Mg(2+). Mn(2+) serves as cofactor.

The protein resides in the cytoplasm. The catalysed reaction is 2 D-alanine + ATP = D-alanyl-D-alanine + ADP + phosphate + H(+). It functions in the pathway cell wall biogenesis; peptidoglycan biosynthesis. Its function is as follows. Cell wall formation. This chain is D-alanine--D-alanine ligase, found in Anaeromyxobacter sp. (strain Fw109-5).